The primary structure comprises 126 residues: Profilin (126 aa).

This sequence belongs to the profilin family. As to quaternary structure, occurs in many kinds of cells as a complex with monomeric actin in a 1:1 ratio.

Its subcellular location is the cytoplasm. The protein localises to the cytoskeleton. Binds to actin and affects the structure of the cytoskeleton. At high concentrations, profilin prevents the polymerization of actin, whereas it enhances it at low concentrations. By binding to PIP2, it inhibits the formation of IP3 and DG. The polypeptide is Profilin (Branchiostoma belcheri (Amphioxus)).